Consider the following 201-residue polypeptide: Recombination protein RecR (201 aa).

The C4-type zinc finger occupies 57 to 72 (CADCRTFTEQEVCNIC). The Toprim domain maps to 81-176 (GQICVVESPA…EASRIAHGVP (96 aa)).

The protein belongs to the RecR family.

In terms of biological role, may play a role in DNA repair. It seems to be involved in an RecBC-independent recombinational process of DNA repair. It may act with RecF and RecO. This is Recombination protein RecR from Shigella boydii serotype 4 (strain Sb227).